A 160-amino-acid polypeptide reads, in one-letter code: Putative pre-16S rRNA nuclease (160 aa).

It belongs to the YqgF nuclease family.

It localises to the cytoplasm. Could be a nuclease involved in processing of the 5'-end of pre-16S rRNA. This chain is Putative pre-16S rRNA nuclease, found in Rhodopseudomonas palustris (strain BisB5).